A 196-amino-acid chain; its full sequence is UPF0215 protein MA_4269 (196 aa).

It belongs to the UPF0215 family.

The chain is UPF0215 protein MA_4269 from Methanosarcina acetivorans (strain ATCC 35395 / DSM 2834 / JCM 12185 / C2A).